The following is a 775-amino-acid chain: Subtilisin-like protease SBT1.5 (775 aa).

A signal peptide spans 1-19; sequence MAFFFYFFFLLTLSSPSSS. A propeptide spans 20-103 (activation peptide); the sequence is ASSSNSLTYI…VIPEQVRHLH (84 aa). The region spanning 27–103 is the Inhibitor I9 domain; it reads TYIVHVDHEA…VIPEQVRHLH (77 aa). The Peptidase S8 domain occupies 107 to 617; that stretch reads SPEFLGLRST…SGHVHPTKAM (511 aa). Residue Asp-137 is the Charge relay system of the active site. A glycan (N-linked (GlcNAc...) asparagine) is linked at Asn-196. His-210 serves as the catalytic Charge relay system. In terms of domain architecture, PA spans 367–459; sequence MYPLVYGGSL…VGASGGDEIR (93 aa). Ser-549 functions as the Charge relay system in the catalytic mechanism. N-linked (GlcNAc...) asparagine glycans are attached at residues Asn-599, Asn-638, and Asn-762.

It belongs to the peptidase S8 family.

Its subcellular location is the secreted. This chain is Subtilisin-like protease SBT1.5, found in Arabidopsis thaliana (Mouse-ear cress).